The chain runs to 362 residues: Phosphoserine aminotransferase (362 aa).

Arg-43 lines the L-glutamate pocket. Pyridoxal 5'-phosphate is bound by residues 77-78 (AT), Trp-103, Thr-153, Asp-173, and Gln-196. The residue at position 197 (Lys-197) is an N6-(pyridoxal phosphate)lysine. Position 238 to 239 (238 to 239 (NT)) interacts with pyridoxal 5'-phosphate.

The protein belongs to the class-V pyridoxal-phosphate-dependent aminotransferase family. SerC subfamily. Homodimer. It depends on pyridoxal 5'-phosphate as a cofactor.

The protein resides in the cytoplasm. The enzyme catalyses O-phospho-L-serine + 2-oxoglutarate = 3-phosphooxypyruvate + L-glutamate. The catalysed reaction is 4-(phosphooxy)-L-threonine + 2-oxoglutarate = (R)-3-hydroxy-2-oxo-4-phosphooxybutanoate + L-glutamate. It functions in the pathway amino-acid biosynthesis; L-serine biosynthesis; L-serine from 3-phospho-D-glycerate: step 2/3. The protein operates within cofactor biosynthesis; pyridoxine 5'-phosphate biosynthesis; pyridoxine 5'-phosphate from D-erythrose 4-phosphate: step 3/5. Functionally, catalyzes the reversible conversion of 3-phosphohydroxypyruvate to phosphoserine and of 3-hydroxy-2-oxo-4-phosphonooxybutanoate to phosphohydroxythreonine. The chain is Phosphoserine aminotransferase from Acidithiobacillus ferrooxidans (strain ATCC 23270 / DSM 14882 / CIP 104768 / NCIMB 8455) (Ferrobacillus ferrooxidans (strain ATCC 23270)).